The chain runs to 76 residues: Exodeoxyribonuclease 7 small subunit (76 aa).

Belongs to the XseB family. Heterooligomer composed of large and small subunits.

It is found in the cytoplasm. It carries out the reaction Exonucleolytic cleavage in either 5'- to 3'- or 3'- to 5'-direction to yield nucleoside 5'-phosphates.. Functionally, bidirectionally degrades single-stranded DNA into large acid-insoluble oligonucleotides, which are then degraded further into small acid-soluble oligonucleotides. The sequence is that of Exodeoxyribonuclease 7 small subunit from Lactiplantibacillus plantarum (strain ATCC BAA-793 / NCIMB 8826 / WCFS1) (Lactobacillus plantarum).